Consider the following 189-residue polypeptide: Small ribosomal subunit protein uS7 (189 aa).

Belongs to the universal ribosomal protein uS7 family. As to quaternary structure, component of the small ribosomal subunit.

It localises to the cytoplasm. This Encephalitozoon cuniculi (strain GB-M1) (Microsporidian parasite) protein is Small ribosomal subunit protein uS7 (RPS5).